The chain runs to 106 residues: Large ribosomal subunit protein uL23 (106 aa).

Belongs to the universal ribosomal protein uL23 family. In terms of assembly, part of the 50S ribosomal subunit. Contacts protein L29, and trigger factor when it is bound to the ribosome.

One of the early assembly proteins it binds 23S rRNA. One of the proteins that surrounds the polypeptide exit tunnel on the outside of the ribosome. Forms the main docking site for trigger factor binding to the ribosome. The polypeptide is Large ribosomal subunit protein uL23 (Neisseria gonorrhoeae (strain ATCC 700825 / FA 1090)).